Reading from the N-terminus, the 509-residue chain is Protein OS-9 homolog (509 aa).

The N-terminal stretch at 1–23 (MRRQSRIVASLLVLACASSGAFA) is a signal peptide. Positions 64–74 (SPDLNDISEQT) are enriched in polar residues. A disordered region spans residues 64–91 (SPDLNDISEQTPLKDESEESIRDGSSGE). The span at 75 to 91 (PLKDESEESIRDGSSGE) shows a compositional bias: basic and acidic residues. N-linked (GlcNAc...) asparagine glycosylation is present at asparagine 120. The MRH domain occupies 151 to 291 (GKCLYYISGW…LIYTPRLCND (141 aa)). A disulfide bridge connects residues cysteine 153 and cysteine 166. Residues tryptophan 160, tryptophan 161, glutamine 173, aspartate 246, arginine 252, glutamate 273, and tyrosine 279 each contribute to the a mannooligosaccharide derivative site. Cystine bridges form between cysteine 245-cysteine 277 and cysteine 260-cysteine 289. A disordered region spans residues 433 to 509 (GVVDTDEDEE…GSEEIFKDEL (77 aa)). Positions 436–451 (DTDEDEEDGYENEEGE) are enriched in acidic residues. The span at 452 to 461 (TDKREQRENT) shows a compositional bias: basic and acidic residues. Residues 489-502 (RSEDGEDPDVDGSE) are compositionally biased toward acidic residues. Positions 506–509 (KDEL) match the Prevents secretion from ER motif.

The protein belongs to the OS-9 family. Interacts with missfolded ER lumenal proteins.

It is found in the endoplasmic reticulum membrane. Functionally, lectin involved in the quality control of the secretory pathway. As a member of the endoplasmic reticulum-associated degradation lumenal (ERAD-L) surveillance system, targets misfolded endoplasmic reticulum lumenal glycoproteins for degradation. This Emericella nidulans (strain FGSC A4 / ATCC 38163 / CBS 112.46 / NRRL 194 / M139) (Aspergillus nidulans) protein is Protein OS-9 homolog (yos9).